The following is a 188-amino-acid chain: Sec-independent protein translocase protein TatB (188 aa).

Residues 1–21 (MFDIGWSELVVIGVVALVAIG) form a helical membrane-spanning segment. Positions 147 to 188 (LPVPAETHALATTDLAPPDLAHPAPAHPEPTNSEPAKDAKAS) are disordered. Residues 160–170 (DLAPPDLAHPA) show a composition bias toward low complexity.

It belongs to the TatB family. As to quaternary structure, the Tat system comprises two distinct complexes: a TatABC complex, containing multiple copies of TatA, TatB and TatC subunits, and a separate TatA complex, containing only TatA subunits. Substrates initially bind to the TatABC complex, which probably triggers association of the separate TatA complex to form the active translocon.

The protein resides in the cell inner membrane. In terms of biological role, part of the twin-arginine translocation (Tat) system that transports large folded proteins containing a characteristic twin-arginine motif in their signal peptide across membranes. Together with TatC, TatB is part of a receptor directly interacting with Tat signal peptides. TatB may form an oligomeric binding site that transiently accommodates folded Tat precursor proteins before their translocation. In Rhodopseudomonas palustris (strain HaA2), this protein is Sec-independent protein translocase protein TatB.